The following is a 353-amino-acid chain: Spermidine/putrescine import ATP-binding protein PotA (353 aa).

The 231-residue stretch at 7-237 folds into the ABC transporter domain; the sequence is IRFERVTKEY…PINRFVADFI (231 aa). 39 to 46 is an ATP binding site; sequence GPSGCGKT.

Belongs to the ABC transporter superfamily. Spermidine/putrescine importer (TC 3.A.1.11.1) family. The complex is composed of two ATP-binding proteins (PotA), two transmembrane proteins (PotB and PotC) and a solute-binding protein (PotD).

Its subcellular location is the cell membrane. It carries out the reaction ATP + H2O + polyamine-[polyamine-binding protein]Side 1 = ADP + phosphate + polyamineSide 2 + [polyamine-binding protein]Side 1.. Functionally, part of the ABC transporter complex PotABCD involved in spermidine/putrescine import. Responsible for energy coupling to the transport system. The sequence is that of Spermidine/putrescine import ATP-binding protein PotA from Geobacillus kaustophilus (strain HTA426).